Here is a 121-residue protein sequence, read N- to C-terminus: Large ribosomal subunit protein bL12 (121 aa).

Belongs to the bacterial ribosomal protein bL12 family. In terms of assembly, homodimer. Part of the ribosomal stalk of the 50S ribosomal subunit. Forms a multimeric L10(L12)X complex, where L10 forms an elongated spine to which 2 to 4 L12 dimers bind in a sequential fashion. Binds GTP-bound translation factors.

Forms part of the ribosomal stalk which helps the ribosome interact with GTP-bound translation factors. Is thus essential for accurate translation. This is Large ribosomal subunit protein bL12 from Psychromonas ingrahamii (strain DSM 17664 / CCUG 51855 / 37).